We begin with the raw amino-acid sequence, 361 residues long: PTI1-like tyrosine-protein kinase At3g15890 (361 aa).

Residues 39-328 (FNYDNKLGEG…ISELEANPLF (290 aa)) enclose the Protein kinase domain. ATP-binding positions include 45–53 (LGEGRFGSV) and K67. D165 serves as the catalytic Proton acceptor. 2 disordered regions span residues 195 to 219 (TGDG…SGKE) and 323 to 361 (EANP…QQQE). Positions 351-361 (LEDKDHQQQQE) are enriched in basic and acidic residues.

Belongs to the protein kinase superfamily. Tyr protein kinase family.

The enzyme catalyses L-tyrosyl-[protein] + ATP = O-phospho-L-tyrosyl-[protein] + ADP + H(+). The polypeptide is PTI1-like tyrosine-protein kinase At3g15890 (Arabidopsis thaliana (Mouse-ear cress)).